An 86-amino-acid polypeptide reads, in one-letter code: Neurotoxin LmNaTx34.2 (86 aa).

The signal sequence occupies residues 1–18; it reads MKTLILVVIALMVIEVKS. Residues 19–85 enclose the LCN-type CS-alpha/beta domain; the sequence is DGYLMVRAGR…IWTYEKNTCS (67 aa). Cystine bridges form between Cys32–Cys84, Cys36–Cys57, Cys43–Cys64, and Cys47–Cys66.

It belongs to the long (4 C-C) scorpion toxin superfamily. Sodium channel inhibitor family. Beta subfamily. As to expression, expressed by the venom gland.

The protein resides in the secreted. Binds voltage-independently at site-4 of sodium channels (Nav) and shift the voltage of activation toward more negative potentials thereby affecting sodium channel activation and promoting spontaneous and repetitive firing. The polypeptide is Neurotoxin LmNaTx34.2 (Lychas mucronatus (Chinese swimming scorpion)).